Consider the following 117-residue polypeptide: Large ribosomal subunit protein eL34 (117 aa).

It belongs to the eukaryotic ribosomal protein eL34 family. Component of the large ribosomal subunit.

It is found in the cytoplasm. The protein localises to the cytosol. Its subcellular location is the endoplasmic reticulum. Its function is as follows. Component of the large ribosomal subunit. The ribosome is a large ribonucleoprotein complex responsible for the synthesis of proteins in the cell. The protein is Large ribosomal subunit protein eL34 (rpl34) of Danio rerio (Zebrafish).